The primary structure comprises 340 residues: Selenide, water dikinase (340 aa).

Sec17 is a catalytic residue. Residue Sec17 is a non-standard amino acid, selenocysteine. ATP is bound by residues Lys20 and 45-47 (NNE). Asp48 contributes to the Mg(2+) binding site. Residues Asp65, Asp88, and 136 to 138 (GHT) contribute to the ATP site. Asp88 serves as a coordination point for Mg(2+). Asp224 is a Mg(2+) binding site.

The protein belongs to the selenophosphate synthase 1 family. Class I subfamily. In terms of assembly, homodimer. Requires Mg(2+) as cofactor.

The enzyme catalyses hydrogenselenide + ATP + H2O = selenophosphate + AMP + phosphate + 2 H(+). In terms of biological role, synthesizes selenophosphate from selenide and ATP. In Campylobacter jejuni (strain RM1221), this protein is Selenide, water dikinase.